The chain runs to 216 residues: Protein-L-isoaspartate O-methyltransferase (216 aa).

Ser66 is an active-site residue.

This sequence belongs to the methyltransferase superfamily. L-isoaspartyl/D-aspartyl protein methyltransferase family.

The protein resides in the cytoplasm. The enzyme catalyses [protein]-L-isoaspartate + S-adenosyl-L-methionine = [protein]-L-isoaspartate alpha-methyl ester + S-adenosyl-L-homocysteine. Its function is as follows. Catalyzes the methyl esterification of L-isoaspartyl residues in peptides and proteins that result from spontaneous decomposition of normal L-aspartyl and L-asparaginyl residues. It plays a role in the repair and/or degradation of damaged proteins. The chain is Protein-L-isoaspartate O-methyltransferase from Dechloromonas aromatica (strain RCB).